Here is a 219-residue protein sequence, read N- to C-terminus: Probable nicotinate-nucleotide adenylyltransferase (219 aa).

This sequence belongs to the NadD family.

The enzyme catalyses nicotinate beta-D-ribonucleotide + ATP + H(+) = deamido-NAD(+) + diphosphate. Its pathway is cofactor biosynthesis; NAD(+) biosynthesis; deamido-NAD(+) from nicotinate D-ribonucleotide: step 1/1. Functionally, catalyzes the reversible adenylation of nicotinate mononucleotide (NaMN) to nicotinic acid adenine dinucleotide (NaAD). The chain is Probable nicotinate-nucleotide adenylyltransferase from Pseudomonas entomophila (strain L48).